The sequence spans 552 residues: Threonylcarbamoyladenosine tRNA methylthiotransferase (552 aa).

Positions 31-61 (YENKKTVTVRAKKRSQIRLESQEEEEKPKPT) are disordered. Residues 71–178 (QKVFVKTWGC…VVEVVEETLK (108 aa)) form the MTTase N-terminal domain. 6 residues coordinate [4Fe-4S] cluster: Cys-80, Cys-115, Cys-144, Cys-221, Cys-225, and Cys-228. One can recognise a Radical SAM core domain in the interval 207–438 (RKNPLIEIIS…DLFYSYEPYA (232 aa)). Residues 438-500 (ADRVGEIYTV…KFSMVGEILD (63 aa)) enclose the TRAM domain. The helical transmembrane segment at 532-552 (FGIALVLGSLAFLIQLVVRLL) threads the bilayer.

Belongs to the methylthiotransferase family. CDKAL1 subfamily. It depends on [4Fe-4S] cluster as a cofactor.

The protein localises to the membrane. The enzyme catalyses N(6)-L-threonylcarbamoyladenosine(37) in tRNA + (sulfur carrier)-SH + AH2 + 2 S-adenosyl-L-methionine = 2-methylsulfanyl-N(6)-L-threonylcarbamoyladenosine(37) in tRNA + (sulfur carrier)-H + 5'-deoxyadenosine + L-methionine + A + S-adenosyl-L-homocysteine + 2 H(+). Its function is as follows. Catalyzes the methylthiolation of N6-threonylcarbamoyladenosine (t(6)A), leading to the formation of 2-methylthio-N6-threonylcarbamoyladenosine (ms(2)t(6)A) at position 37 in tRNAs that read codons beginning with adenine. The sequence is that of Threonylcarbamoyladenosine tRNA methylthiotransferase from Drosophila melanogaster (Fruit fly).